Here is a 220-residue protein sequence, read N- to C-terminus: 7-cyano-7-deazaguanine synthase (220 aa).

An ATP-binding site is contributed by 10–20; that stretch reads FSGGQDSTTCL. Cys186, Cys195, Cys198, and Cys201 together coordinate Zn(2+).

Belongs to the QueC family. Homodimer. The cofactor is Zn(2+).

It catalyses the reaction 7-carboxy-7-deazaguanine + NH4(+) + ATP = 7-cyano-7-deazaguanine + ADP + phosphate + H2O + H(+). It functions in the pathway purine metabolism; 7-cyano-7-deazaguanine biosynthesis. In terms of biological role, catalyzes the ATP-dependent conversion of 7-carboxy-7-deazaguanine (CDG) to 7-cyano-7-deazaguanine (preQ(0)). This chain is 7-cyano-7-deazaguanine synthase, found in Bacillus cereus (strain G9842).